The sequence spans 113 residues: Protein ORF3 (113 aa).

Hydrophobic stretches follow at residues 1-21 and 32-52; these read MGSP…CLCC and AVVG…GLIL. Residues 27 to 67 are interaction with host HPX; that stretch reads ASRLAAVVGGAAAVPAVVSGVTGLILSPSPSPIFIQPTPSP. Residues 47 to 71 are interaction with the capsid protein; it reads VTGLILSPSPSPIFIQPTPSPPMSF. Phosphoserine; by host is present on S70. The segment at 71–113 is homodimerization, and interaction with host AMBP/bikunin; sequence FHNPGLELALDSRPAPLXPLGVTSPSAPPLPPVVDLPQLGLRR. Positions 90–113 are disordered; it reads LGVTSPSAPPLPPVVDLPQLGLRR. The segment at 94-103 is interaction with host SRC, HCK, FYN, PIK3R3 and GRB2; that stretch reads SPSAPPLPPV. Positions 95-98 match the PTAP/PSAP motif motif; the sequence is PSAP.

Belongs to the hepevirus ORF3 protein family. In terms of assembly, forms homooligomers. Interacts with host SRC, HCK, FYN, PIK3R3 and GRB2 (via SH3 domain); binding does not activate the kinases. Interacts with host AMBP/bikunin and AMBP/alpha-1-microglobulin peptides. Interacts with host HPX/hemopexin. Interacts (when phosphorylated) with capsid protein ORF2. Interacts with host TSG101; this interaction plays a role in viral release from the host cell. Interacts with host SIRPA; this interaction down-regulates the phosphorylation of host IRF3. In terms of processing, palmitoylated in the N-terminus.

The protein resides in the host endoplasmic reticulum membrane. Its subcellular location is the host cytoplasm. It is found in the host cytoskeleton. The protein localises to the virion. It localises to the host cell membrane. In terms of biological role, small multifunctional phosphoprotein involved in virion morphogenesis, egress and counteracting host innate immunity. Plays critical roles in the final steps of viral release by interacting with host TSG101, a member of the vacuolar protein-sorting pathway and using other cellular host proteins involved in vesicle formation pathway. Also acts as a viroporin and forms ion conductive pores allowing viral particle release. Impairs the generation of type I interferon by down-regulating host TLR3 and TLR7 as well as their downstream signaling pathways. Down-regulates the phosphorylation of host IRF3 via the interaction with host SIRP-alpha, thereby inhibiting IFN-I expression. Interacts with host microtubules. This is Protein ORF3 from Hepatitis E virus genotype 3 (isolate Human/United States/US2) (HEV-3).